We begin with the raw amino-acid sequence, 415 residues long: Tyrosine--tRNA ligase (415 aa).

The 'HIGH' region motif lies at 54–63; it reads PTGSNIHLGH. The 'KMSKS' region signature appears at 248–252; the sequence is KMSKS. An ATP-binding site is contributed by K251. One can recognise an S4 RNA-binding domain in the interval 351 to 415; that stretch reads AKAFYLLSAV…GKKTFRRLTA (65 aa).

It belongs to the class-I aminoacyl-tRNA synthetase family. TyrS type 2 subfamily. As to quaternary structure, homodimer.

It localises to the cytoplasm. It catalyses the reaction tRNA(Tyr) + L-tyrosine + ATP = L-tyrosyl-tRNA(Tyr) + AMP + diphosphate + H(+). In terms of biological role, catalyzes the attachment of tyrosine to tRNA(Tyr) in a two-step reaction: tyrosine is first activated by ATP to form Tyr-AMP and then transferred to the acceptor end of tRNA(Tyr). The polypeptide is Tyrosine--tRNA ligase (Parasynechococcus marenigrum (strain WH8102)).